The sequence spans 378 residues: Fetuin-B (378 aa).

The first 18 residues, M1–A18, serve as a signal peptide directing secretion. Cystatin fetuin-B-type domains follow at residues N28 to T141 and S152 to E261. An N-linked (GlcNAc...) asparagine glycan is attached at N40. Intrachain disulfides connect C96–C107, C120–C140, C154–C157, C217–C224, and C237–C260. N-linked (GlcNAc...) asparagine glycosylation is present at N139. Disordered stretches follow at residues Q266–D338 and L357–P378. Positions Q286 to I297 are enriched in polar residues. O-linked (GalNAc...) threonine glycosylation is found at T289 and T292. A Phosphoserine modification is found at S316. Positions K362–P378 are enriched in basic and acidic residues.

It belongs to the fetuin family. As to expression, liver.

It localises to the secreted. Protease inhibitor required for egg fertilization. Required to prevent premature zona pellucida hardening before fertilization, probably by inhibiting the protease activity of ASTL, a protease that mediates the cleavage of ZP2 and triggers zona pellucida hardening. This is Fetuin-B (Fetub) from Rattus norvegicus (Rat).